A 722-amino-acid polypeptide reads, in one-letter code: Glycine--tRNA ligase beta subunit (722 aa).

This sequence belongs to the class-II aminoacyl-tRNA synthetase family. In terms of assembly, tetramer of two alpha and two beta subunits.

The protein localises to the cytoplasm. It catalyses the reaction tRNA(Gly) + glycine + ATP = glycyl-tRNA(Gly) + AMP + diphosphate. The polypeptide is Glycine--tRNA ligase beta subunit (glyS) (Xylella fastidiosa (strain 9a5c)).